The sequence spans 445 residues: Phosphoglucosamine mutase (445 aa).

The active-site Phosphoserine intermediate is S99. Mg(2+)-binding residues include S99, D242, D244, and D246. S99 carries the post-translational modification Phosphoserine.

This sequence belongs to the phosphohexose mutase family. The cofactor is Mg(2+). Activated by phosphorylation.

It catalyses the reaction alpha-D-glucosamine 1-phosphate = D-glucosamine 6-phosphate. Functionally, catalyzes the conversion of glucosamine-6-phosphate to glucosamine-1-phosphate. The protein is Phosphoglucosamine mutase of Helicobacter acinonychis (strain Sheeba).